Here is a 466-residue protein sequence, read N- to C-terminus: Coagulation factor VII (466 aa).

An N-terminal signal peptide occupies residues 1 to 20; it reads MVSQALRLLCLLLGLQGCLA. Positions 21–60 are excised as a propeptide; sequence AGGVAEASGGETRDXXWKPGPHRVFITQEEAHGVLHRRRR. Positions 61–105 constitute a Gla domain; that stretch reads ANAFLEELRPGSLERECKEEQCSFEEAREIFKDLERTKLFWISYS. 10 positions are modified to 4-carboxyglutamate: E66, E67, E74, E76, E79, E80, E85, E86, E89, and E95. C77 and C82 are disulfide-bonded. The 37-residue stretch at 106-142 folds into the EGF-like 1; calcium-binding domain; it reads DGDQCASSPCQNGGSCKDQLQSYICFCLPAFEGRNCE. Disulfide bonds link C110–C121, C115–C130, C132–C141, C151–C162, C158–C172, C174–C187, C195–C322, C219–C224, C238–C254, and C370–C389. S112 is a glycosylation site (O-linked (Glc...) serine; alternate). A glycan (O-linked (Xyl...) serine; alternate) is linked at S112. S120 carries O-linked (Fuc) serine glycosylation. Position 123 is a (3R)-3-hydroxyaspartate (D123). Positions 147 to 188 constitute an EGF-like 2 domain; that stretch reads DQLICVNENGGCEQYCSDHTGTKRSCRCHEGYSLLADGVSCT. N205 carries N-linked (GlcNAc...) asparagine glycosylation. Residues 213–452 enclose the Peptidase S1 domain; the sequence is IVGGKVCPKG…YIEWLQKLMR (240 aa). Catalysis depends on charge relay system residues H253 and D302. N-linked (GlcNAc...) asparagine glycosylation occurs at N382. D398 is a substrate binding site. C400 and C428 are joined by a disulfide. S404 functions as the Charge relay system in the catalytic mechanism.

This sequence belongs to the peptidase S1 family. In terms of assembly, heterodimer of a light chain and a heavy chain linked by a disulfide bond. The vitamin K-dependent, enzymatic carboxylation of some glutamate residues allows the modified protein to bind calcium. Post-translationally, the iron and 2-oxoglutarate dependent 3-hydroxylation of aspartate and asparagine is (R) stereospecific within EGF domains. In terms of processing, O-glycosylated. O-fucosylated by POFUT1 on a conserved serine or threonine residue found in the consensus sequence C2-X(4,5)-[S/T]-C3 of EGF domains, where C2 and C3 are the second and third conserved cysteines. Can be either O-glucosylated or O-xylosylated at Ser-112 by POGLUT1.

The protein resides in the secreted. The enzyme catalyses Selective cleavage of Arg-|-Ile bond in factor X to form factor Xa.. In terms of biological role, initiates the extrinsic pathway of blood coagulation. Serine protease that circulates in the blood in a zymogen form. Factor VII is converted to factor VIIa by factor Xa, factor XIIa, factor IXa, or thrombin by minor proteolysis. In the presence of tissue factor and calcium ions, factor VIIa then converts factor X to factor Xa by limited proteolysis. Factor VIIa also converts factor IX to factor IXa in the presence of tissue factor and calcium. In Pan troglodytes (Chimpanzee), this protein is Coagulation factor VII (F7).